A 223-amino-acid chain; its full sequence is Type III pantothenate kinase (223 aa).

ATP is bound at residue 17-24 (DIGNTHIH). Residues Y81 and 85 to 88 (GIDR) contribute to the substrate site. D87 functions as the Proton acceptor in the catalytic mechanism. D102 contacts K(+). An ATP-binding site is contributed by S105. T157 lines the substrate pocket.

This sequence belongs to the type III pantothenate kinase family. As to quaternary structure, homodimer. NH4(+) is required as a cofactor. Requires K(+) as cofactor.

The protein localises to the cytoplasm. It carries out the reaction (R)-pantothenate + ATP = (R)-4'-phosphopantothenate + ADP + H(+). The protein operates within cofactor biosynthesis; coenzyme A biosynthesis; CoA from (R)-pantothenate: step 1/5. Catalyzes the phosphorylation of pantothenate (Pan), the first step in CoA biosynthesis. This chain is Type III pantothenate kinase, found in Helicobacter pylori (strain HPAG1).